Here is a 1571-residue protein sequence, read N- to C-terminus: Pentafunctional AROM polypeptide (1571 aa).

The interval 1–384 (MEQPTTIQIL…HEQKASVVSN (384 aa)) is 3-dehydroquinate synthase. Residues 44–46 (DTN), 81–84 (ESSK), 114–116 (GGV), and aspartate 119 each bind NAD(+). Residue arginine 130 participates in 7-phospho-2-dehydro-3-deoxy-D-arabino-heptonate binding. 139–140 (TT) lines the NAD(+) pocket. Residues aspartate 146 and lysine 152 each coordinate 7-phospho-2-dehydro-3-deoxy-D-arabino-heptonate. Position 161 (lysine 161) interacts with NAD(+). A 7-phospho-2-dehydro-3-deoxy-D-arabino-heptonate-binding site is contributed by asparagine 162. NAD(+) is bound by residues 179 to 182 (FLNT) and asparagine 190. Glutamate 194 serves as a coordination point for Zn(2+). Residues 194–197 (EVIK) and lysine 250 contribute to the 7-phospho-2-dehydro-3-deoxy-D-arabino-heptonate site. Glutamate 260 (proton acceptor; for 3-dehydroquinate synthase activity) is an active-site residue. Residues 264–268 (RNLLN) and histidine 271 contribute to the 7-phospho-2-dehydro-3-deoxy-D-arabino-heptonate site. Histidine 271 serves as a coordination point for Zn(2+). The Proton acceptor; for 3-dehydroquinate synthase activity role is filled by histidine 275. Residues histidine 287 and lysine 356 each coordinate 7-phospho-2-dehydro-3-deoxy-D-arabino-heptonate. Histidine 287 is a Zn(2+) binding site. The tract at residues 397-843 (VLPGIPKPLN…WDALAQTFKV (447 aa)) is EPSP synthase. The active-site For EPSP synthase activity is cysteine 825. The segment at 866 to 1057 (ASIFIIGMRG…KKKDHSFFVS (192 aa)) is shikimate kinase. An ATP-binding site is contributed by 872-879 (GMRGAGKT). The segment at 1058–1278 (LTLPDLQLSA…AAPGQVSAKD (221 aa)) is 3-dehydroquinase. Histidine 1181 (proton acceptor; for 3-dehydroquinate dehydratase activity) is an active-site residue. The active-site Schiff-base intermediate with substrate; for 3-dehydroquinate dehydratase activity is the lysine 1209. Residues 1291 to 1571 (AKKFALFGKP…EDARAAVMNI (281 aa)) are shikimate dehydrogenase.

The protein in the N-terminal section; belongs to the sugar phosphate cyclases superfamily. Dehydroquinate synthase family. It in the 2nd section; belongs to the EPSP synthase family. This sequence in the 3rd section; belongs to the shikimate kinase family. In the 4th section; belongs to the type-I 3-dehydroquinase family. The protein in the C-terminal section; belongs to the shikimate dehydrogenase family. Homodimer. The cofactor is Zn(2+).

The protein resides in the cytoplasm. The catalysed reaction is 7-phospho-2-dehydro-3-deoxy-D-arabino-heptonate = 3-dehydroquinate + phosphate. The enzyme catalyses 3-dehydroquinate = 3-dehydroshikimate + H2O. It carries out the reaction shikimate + NADP(+) = 3-dehydroshikimate + NADPH + H(+). It catalyses the reaction shikimate + ATP = 3-phosphoshikimate + ADP + H(+). The catalysed reaction is 3-phosphoshikimate + phosphoenolpyruvate = 5-O-(1-carboxyvinyl)-3-phosphoshikimate + phosphate. The protein operates within metabolic intermediate biosynthesis; chorismate biosynthesis; chorismate from D-erythrose 4-phosphate and phosphoenolpyruvate: step 2/7. It participates in metabolic intermediate biosynthesis; chorismate biosynthesis; chorismate from D-erythrose 4-phosphate and phosphoenolpyruvate: step 3/7. It functions in the pathway metabolic intermediate biosynthesis; chorismate biosynthesis; chorismate from D-erythrose 4-phosphate and phosphoenolpyruvate: step 4/7. Its pathway is metabolic intermediate biosynthesis; chorismate biosynthesis; chorismate from D-erythrose 4-phosphate and phosphoenolpyruvate: step 5/7. The protein operates within metabolic intermediate biosynthesis; chorismate biosynthesis; chorismate from D-erythrose 4-phosphate and phosphoenolpyruvate: step 6/7. In terms of biological role, the AROM polypeptide catalyzes 5 consecutive enzymatic reactions in prechorismate polyaromatic amino acid biosynthesis. This chain is Pentafunctional AROM polypeptide, found in Arthroderma otae (strain ATCC MYA-4605 / CBS 113480) (Microsporum canis).